Here is a 216-residue protein sequence, read N- to C-terminus: Ribonuclease HII (216 aa).

The region spanning Trp33–Val216 is the RNase H type-2 domain. Positions 39, 40, and 130 each coordinate a divalent metal cation.

The protein belongs to the RNase HII family. Requires Mn(2+) as cofactor. Mg(2+) serves as cofactor.

It localises to the cytoplasm. It carries out the reaction Endonucleolytic cleavage to 5'-phosphomonoester.. Functionally, endonuclease that specifically degrades the RNA of RNA-DNA hybrids. In Rhizobium meliloti (strain 1021) (Ensifer meliloti), this protein is Ribonuclease HII.